A 390-amino-acid chain; its full sequence is Succinyl-diaminopimelate desuccinylase 1 (390 aa).

A Zn(2+)-binding site is contributed by H76. D78 is an active-site residue. Position 109 (D109) interacts with Zn(2+). E143 (proton acceptor) is an active-site residue. Zn(2+) is bound by residues E144, E172, and H363.

Belongs to the peptidase M20A family. DapE subfamily. Homodimer. Requires Zn(2+) as cofactor. It depends on Co(2+) as a cofactor.

The enzyme catalyses N-succinyl-(2S,6S)-2,6-diaminopimelate + H2O = (2S,6S)-2,6-diaminopimelate + succinate. It functions in the pathway amino-acid biosynthesis; L-lysine biosynthesis via DAP pathway; LL-2,6-diaminopimelate from (S)-tetrahydrodipicolinate (succinylase route): step 3/3. In terms of biological role, catalyzes the hydrolysis of N-succinyl-L,L-diaminopimelic acid (SDAP), forming succinate and LL-2,6-diaminopimelate (DAP), an intermediate involved in the bacterial biosynthesis of lysine and meso-diaminopimelic acid, an essential component of bacterial cell walls. This chain is Succinyl-diaminopimelate desuccinylase 1, found in Alteromonas mediterranea (strain DSM 17117 / CIP 110805 / LMG 28347 / Deep ecotype).